Here is a 77-residue protein sequence, read N- to C-terminus: Coiled-coil-helix-coiled-coil-helix domain-containing protein C550.01c (77 aa).

In terms of domain architecture, CHCH spans 24 to 65 (KGGCVEEHLRLNDCYWDTHDWRKCTEQMEEFRKCWEKRHGPL). Short sequence motifs (cx9C motif) lie at residues 27-37 (CVEEHLRLNDC) and 47-57 (CTEQMEEFRKC). Cystine bridges form between cysteine 27–cysteine 57 and cysteine 37–cysteine 47.

Its subcellular location is the cytoplasm. The protein localises to the nucleus. This is Coiled-coil-helix-coiled-coil-helix domain-containing protein C550.01c from Schizosaccharomyces pombe (strain 972 / ATCC 24843) (Fission yeast).